The chain runs to 464 residues: Cyclic 2,3-diphosphoglycerate synthetase (464 aa).

This sequence belongs to the cyclic 2,3-diphosphoglycerate synthetase family.

Its subcellular location is the cytoplasm. The enzyme catalyses (2R)-2,3-bisphosphoglycerate + ATP + H(+) = cyclic (2R)-2,3-bisphosphoglycerate + ADP + phosphate. With respect to regulation, activity decreases in response to phosphate limitation. Catalyzes the formation of cyclic 2,3-diphosphoglycerate (cDPG) by formation of an intramolecular phosphoanhydride bond at the expense of ATP. Not able to catalyze cDPG hydrolysis. May be involved in osmotic balance. This chain is Cyclic 2,3-diphosphoglycerate synthetase (cpgS), found in Methanothermobacter thermautotrophicus (strain ATCC 29096 / DSM 1053 / JCM 10044 / NBRC 100330 / Delta H) (Methanobacterium thermoautotrophicum).